We begin with the raw amino-acid sequence, 129 residues long: 3-aminoacrylate deaminase RutC (129 aa).

This sequence belongs to the RutC family.

The catalysed reaction is (Z)-3-aminoacrylate + H2O + H(+) = 3-oxopropanoate + NH4(+). Functionally, involved in pyrimidine catabolism. Catalyzes the deamination of 3-aminoacrylate to malonic semialdehyde, a reaction that can also occur spontaneously. RutC may facilitate the reaction and modulate the metabolic fitness, rather than catalyzing essential functions. This Rhizobium rhizogenes (strain K84 / ATCC BAA-868) (Agrobacterium radiobacter) protein is 3-aminoacrylate deaminase RutC.